Reading from the N-terminus, the 260-residue chain is Shikimate dehydrogenase (NADP(+)) (260 aa).

Residues 14 to 16 (SAS) and Thr-60 contribute to the shikimate site. Lys-64 acts as the Proton acceptor in catalysis. Residues Asn-85 and Asp-100 each coordinate shikimate. Residues 121-125 (GAGGA), 145-150 (NRTYER), and Phe-201 contribute to the NADP(+) site. Residue Tyr-203 participates in shikimate binding. An NADP(+)-binding site is contributed by Gly-225.

It belongs to the shikimate dehydrogenase family. In terms of assembly, homodimer.

The enzyme catalyses shikimate + NADP(+) = 3-dehydroshikimate + NADPH + H(+). It participates in metabolic intermediate biosynthesis; chorismate biosynthesis; chorismate from D-erythrose 4-phosphate and phosphoenolpyruvate: step 4/7. Functionally, involved in the biosynthesis of the chorismate, which leads to the biosynthesis of aromatic amino acids. Catalyzes the reversible NADPH linked reduction of 3-dehydroshikimate (DHSA) to yield shikimate (SA). The protein is Shikimate dehydrogenase (NADP(+)) of Pyrobaculum neutrophilum (strain DSM 2338 / JCM 9278 / NBRC 100436 / V24Sta) (Thermoproteus neutrophilus).